The primary structure comprises 116 residues: Small ribosomal subunit protein uS17 (116 aa).

This sequence belongs to the universal ribosomal protein uS17 family. As to quaternary structure, part of the 30S ribosomal subunit.

Its function is as follows. One of the primary rRNA binding proteins, it binds specifically to the 5'-end of 16S ribosomal RNA. The chain is Small ribosomal subunit protein uS17 from Pyrococcus horikoshii (strain ATCC 700860 / DSM 12428 / JCM 9974 / NBRC 100139 / OT-3).